A 151-amino-acid polypeptide reads, in one-letter code: 3-hydroxyacyl-[acyl-carrier-protein] dehydratase FabZ (151 aa).

The active site involves histidine 54.

It belongs to the thioester dehydratase family. FabZ subfamily.

It is found in the cytoplasm. The catalysed reaction is a (3R)-hydroxyacyl-[ACP] = a (2E)-enoyl-[ACP] + H2O. Functionally, involved in unsaturated fatty acids biosynthesis. Catalyzes the dehydration of short chain beta-hydroxyacyl-ACPs and long chain saturated and unsaturated beta-hydroxyacyl-ACPs. The chain is 3-hydroxyacyl-[acyl-carrier-protein] dehydratase FabZ from Blochmanniella pennsylvanica (strain BPEN).